The primary structure comprises 41 residues: Minor histocompatibility protein HB-1 (41 aa).

A loss of recognition by cytotoxic T lymphocyte (CTL) region spans residues 9 to 17 (EEKRGSLHV).

HB-1 forms a complex with MHC class I HLA-B44. In terms of tissue distribution, expressed in acute lymphoblastic leukemia B-cells and Epstein-Barr virus-transformed B-cells.

In terms of biological role, precursor of the histocomplatibility antigen HB-1. More generally, minor histocomplatibility antigens (mHags) refer to immunogenic peptide which, when complexed with MHC, can generate an immune response after recognition by specific T-cells. The peptides are derived from polymorphic intracellular proteins, which are cleaved by normal pathways of antigen processing. The binding of these peptides to MHC class I or class II molecules and its expression on the cell surface can stimulate T-cell responses and thereby trigger graft rejection or graft-versus-host disease (GVHD) after hematopoietic stem cell transplantation from HLA-identical sibling donor. GVHD is a frequent complication after bone marrow transplantation (BMT), due to mismatch of minor histocomplatibility antigen in HLA-matched sibling marrow transplants. HB-1 is presented on the cell surface by MHC class I HLA-B44. This complex specifically elicits donor-cytotoxic T lymphocyte (CTL) reactivity in B-cell acute lymphoblastic leukemia (B-ALL) after treatment by HLA-identical allogenic bone marrow transplantation (BMT). It induces cell recognition and lysis by CTL. However, HB-1 restricted expression in B-ALL cells and not in normal tissues may allow a specific CTL reactivity against B-ALL without the risk of evoking graft-versus-host disease. This is Minor histocompatibility protein HB-1 (HMHB1) from Homo sapiens (Human).